Here is a 174-residue protein sequence, read N- to C-terminus: ATP-dependent protease subunit HslV (174 aa).

The active site involves Thr2. Na(+) contacts are provided by Gly157, Cys160, and Thr163.

It belongs to the peptidase T1B family. HslV subfamily. As to quaternary structure, a double ring-shaped homohexamer of HslV is capped on each side by a ring-shaped HslU homohexamer. The assembly of the HslU/HslV complex is dependent on binding of ATP.

The protein resides in the cytoplasm. It carries out the reaction ATP-dependent cleavage of peptide bonds with broad specificity.. Its activity is regulated as follows. Allosterically activated by HslU binding. Its function is as follows. Protease subunit of a proteasome-like degradation complex believed to be a general protein degrading machinery. In Shewanella woodyi (strain ATCC 51908 / MS32), this protein is ATP-dependent protease subunit HslV.